Consider the following 747-residue polypeptide: Catalase-peroxidase 1 (747 aa).

Basic and acidic residues predominate over residues 1-22; that stretch reads MTDTSDARPPHSDDKTRSHSES. The interval 1 to 39 is disordered; that stretch reads MTDTSDARPPHSDDKTRSHSESENPAIDSPEPKVHAPLT. Residues 112–240 constitute a cross-link (tryptophyl-tyrosyl-methioninium (Trp-Tyr) (with M-266)); the sequence is WHAAGTYRIF…FGATTMGLIY (129 aa). His113 functions as the Proton acceptor in the catalytic mechanism. The segment at residues 240-266 is a cross-link (tryptophyl-tyrosyl-methioninium (Tyr-Met) (with W-112)); that stretch reads YVNPEGPEGKPDPLAAAHDIRETFGRM. His281 provides a ligand contact to heme b.

It belongs to the peroxidase family. Peroxidase/catalase subfamily. Homodimer or homotetramer. It depends on heme b as a cofactor. Formation of the three residue Trp-Tyr-Met cross-link is important for the catalase, but not the peroxidase activity of the enzyme.

The catalysed reaction is H2O2 + AH2 = A + 2 H2O. It carries out the reaction 2 H2O2 = O2 + 2 H2O. Bifunctional enzyme with both catalase and broad-spectrum peroxidase activity. The protein is Catalase-peroxidase 1 of Mycolicibacterium vanbaalenii (strain DSM 7251 / JCM 13017 / BCRC 16820 / KCTC 9966 / NRRL B-24157 / PYR-1) (Mycobacterium vanbaalenii).